A 489-amino-acid chain; its full sequence is Mitogen-activated protein kinase adapter protein MST50 (489 aa).

Positions methionine 1–serine 56 are disordered. The segment covering proline 37 to tyrosine 54 has biased composition (polar residues). Residues tryptophan 69–alanine 132 form the SAM domain. 2 disordered regions span residues proline 207–arginine 285 and serine 309–alanine 379. 2 stretches are compositionally biased toward polar residues: residues proline 256–glutamine 265 and alanine 328–alanine 346. Residues serine 377–asparagine 457 enclose the Ras-associating domain.

Interacts with MST7 and MST11. Interacts with MCK1, MKK2 and HIK1.

Mitogen-activated protein kinase adapter protein; part of the MST11-MST7-PMK1 MAP kinase (MAPK) cascade that is essential for appressorium formation, penetration and invasive growth. Binds to the MAPKKK MST11 and the MAPKK MST7 to maintain the stability of the MST11-MST7 complex for the phosphorylation of the MAPK PMK1. Is also involved in the MPS1 and OSM1 MAPK pathways, and especially plays a role in the activation of MPS1 in response to cell wall stress. Its function differs in the 3 MAPK pathways. The sequence is that of Mitogen-activated protein kinase adapter protein MST50 from Pyricularia oryzae (strain 70-15 / ATCC MYA-4617 / FGSC 8958) (Rice blast fungus).